Here is a 531-residue protein sequence, read N- to C-terminus: 2-isopropylmalate synthase (531 aa).

The Pyruvate carboxyltransferase domain occupies 8 to 284 (IIIFDTTLRD…LTNIDTKQIY (277 aa)). Mn(2+) is bound by residues D17, H208, H210, and N244. The regulatory domain stretch occupies residues 408-531 (RVELVQVSCG…TQDKQTEVTA (124 aa)).

The protein belongs to the alpha-IPM synthase/homocitrate synthase family. LeuA type 1 subfamily. Homodimer. Mn(2+) serves as cofactor.

The protein resides in the cytoplasm. The enzyme catalyses 3-methyl-2-oxobutanoate + acetyl-CoA + H2O = (2S)-2-isopropylmalate + CoA + H(+). Its pathway is amino-acid biosynthesis; L-leucine biosynthesis; L-leucine from 3-methyl-2-oxobutanoate: step 1/4. Its function is as follows. Catalyzes the condensation of the acetyl group of acetyl-CoA with 3-methyl-2-oxobutanoate (2-ketoisovalerate) to form 3-carboxy-3-hydroxy-4-methylpentanoate (2-isopropylmalate). The chain is 2-isopropylmalate synthase from Nostoc sp. (strain PCC 7120 / SAG 25.82 / UTEX 2576).